We begin with the raw amino-acid sequence, 486 residues long: Maintenance of mitochondrial morphology protein 1 (486 aa).

Topologically, residues Met1 to Gly23 are lumenal. A helical transmembrane segment spans residues Phe24–Phe44. Over Gly45–Gln486 the chain is Cytoplasmic. The interval Ser52–Ser103 is disordered. Residues Ser67 to Ser84 are compositionally biased toward low complexity. A compositionally biased stretch (polar residues) spans Pro92–Ser103. The SMP-LTD domain occupies Gln140–Pro389. Over residues Ala413–Ala426 the composition is skewed to low complexity. The interval Ala413–Gln486 is disordered.

It belongs to the MMM1 family. Homodimer. Component of the ER-mitochondria encounter structure (ERMES) or MDM complex, composed of mmm1, mdm10, mdm12 and mdm34. A mmm1 homodimer associates with one molecule of mdm12 on each side in a pairwise head-to-tail manner, and the SMP-LTD domains of mmm1 and mdm12 generate a continuous hydrophobic tunnel for phospholipid trafficking.

Its subcellular location is the endoplasmic reticulum membrane. Its function is as follows. Component of the ERMES/MDM complex, which serves as a molecular tether to connect the endoplasmic reticulum (ER) and mitochondria. Components of this complex are involved in the control of mitochondrial shape and protein biogenesis, and function in nonvesicular lipid trafficking between the ER and mitochondria. The mdm12-mmm1 subcomplex functions in the major beta-barrel assembly pathway that is responsible for biogenesis of all outer membrane beta-barrel proteins, and acts in a late step after the SAM complex. The mdm10-mdm12-mmm1 subcomplex further acts in the TOM40-specific pathway after the action of the mdm12-mmm1 complex. Essential for establishing and maintaining the structure of mitochondria and maintenance of mtDNA nucleoids. This Talaromyces marneffei (strain ATCC 18224 / CBS 334.59 / QM 7333) (Penicillium marneffei) protein is Maintenance of mitochondrial morphology protein 1.